A 116-amino-acid chain; its full sequence is SGSCSLKTCWLQLADFRKVGDALKEKYDSAAAMKLNPRGKLVQVNSRFNAPTIHDLVYIDPSPDYCVRNESTGSLGTQGRLCNKTSEGMDGCELMCCGRGYDQFKTVQTERCHCKF.

Ser-1 carries O-palmitoleoyl serine; by PORCN lipidation. Asn-69 and Asn-83 each carry an N-linked (GlcNAc...) asparagine glycan. A disulfide bridge links Cys-82 with Cys-97.

This sequence belongs to the Wnt family. In terms of processing, palmitoleoylation is required for efficient binding to frizzled receptors. Depalmitoleoylation leads to Wnt signaling pathway inhibition.

It is found in the secreted. The protein localises to the extracellular space. Its subcellular location is the extracellular matrix. Functionally, ligand for members of the frizzled family of seven transmembrane receptors. Can activate or inhibit canonical Wnt signaling, depending on receptor context. Required during embryogenesis for extension of the primary anterior-posterior axis. This Plestiodon skiltonianus (Western skink) protein is Protein Wnt-5a (WNT-5A).